A 361-amino-acid polypeptide reads, in one-letter code: Phosphoserine aminotransferase (361 aa).

Arg43 lines the L-glutamate pocket. Residues 77–78 (AS), Trp103, Thr153, Asp173, and Gln196 contribute to the pyridoxal 5'-phosphate site. The residue at position 197 (Lys197) is an N6-(pyridoxal phosphate)lysine. Residue 238-239 (NT) participates in pyridoxal 5'-phosphate binding.

It belongs to the class-V pyridoxal-phosphate-dependent aminotransferase family. SerC subfamily. In terms of assembly, homodimer. Requires pyridoxal 5'-phosphate as cofactor.

It is found in the cytoplasm. The enzyme catalyses O-phospho-L-serine + 2-oxoglutarate = 3-phosphooxypyruvate + L-glutamate. It catalyses the reaction 4-(phosphooxy)-L-threonine + 2-oxoglutarate = (R)-3-hydroxy-2-oxo-4-phosphooxybutanoate + L-glutamate. The protein operates within amino-acid biosynthesis; L-serine biosynthesis; L-serine from 3-phospho-D-glycerate: step 2/3. Its pathway is cofactor biosynthesis; pyridoxine 5'-phosphate biosynthesis; pyridoxine 5'-phosphate from D-erythrose 4-phosphate: step 3/5. Functionally, catalyzes the reversible conversion of 3-phosphohydroxypyruvate to phosphoserine and of 3-hydroxy-2-oxo-4-phosphonooxybutanoate to phosphohydroxythreonine. The chain is Phosphoserine aminotransferase from Stutzerimonas stutzeri (Pseudomonas stutzeri).